The chain runs to 411 residues: Citrate synthase (411 aa).

Residues His304 and Asp363 contribute to the active site.

It belongs to the citrate synthase family.

It carries out the reaction oxaloacetate + acetyl-CoA + H2O = citrate + CoA + H(+). It functions in the pathway carbohydrate metabolism; tricarboxylic acid cycle; isocitrate from oxaloacetate: step 1/2. This Rickettsia conorii subsp. caspia (strain A-167) (Astrakhan rickettsia) protein is Citrate synthase (gltA).